Consider the following 156-residue polypeptide: ATP synthase subunit b (156 aa).

A helical transmembrane segment spans residues isoleucine 3–threonine 23.

It belongs to the ATPase B chain family. F-type ATPases have 2 components, F(1) - the catalytic core - and F(0) - the membrane proton channel. F(1) has five subunits: alpha(3), beta(3), gamma(1), delta(1), epsilon(1). F(0) has three main subunits: a(1), b(2) and c(10-14). The alpha and beta chains form an alternating ring which encloses part of the gamma chain. F(1) is attached to F(0) by a central stalk formed by the gamma and epsilon chains, while a peripheral stalk is formed by the delta and b chains.

It is found in the cell membrane. Functionally, f(1)F(0) ATP synthase produces ATP from ADP in the presence of a proton or sodium gradient. F-type ATPases consist of two structural domains, F(1) containing the extramembraneous catalytic core and F(0) containing the membrane proton channel, linked together by a central stalk and a peripheral stalk. During catalysis, ATP synthesis in the catalytic domain of F(1) is coupled via a rotary mechanism of the central stalk subunits to proton translocation. Component of the F(0) channel, it forms part of the peripheral stalk, linking F(1) to F(0). This chain is ATP synthase subunit b, found in Stenotrophomonas maltophilia (strain K279a).